A 274-amino-acid polypeptide reads, in one-letter code: Ribosomal RNA small subunit methyltransferase A (274 aa).

His15, Leu17, Gly42, Glu64, Asp89, and Asn108 together coordinate S-adenosyl-L-methionine.

This sequence belongs to the class I-like SAM-binding methyltransferase superfamily. rRNA adenine N(6)-methyltransferase family. RsmA subfamily.

The protein localises to the cytoplasm. The catalysed reaction is adenosine(1518)/adenosine(1519) in 16S rRNA + 4 S-adenosyl-L-methionine = N(6)-dimethyladenosine(1518)/N(6)-dimethyladenosine(1519) in 16S rRNA + 4 S-adenosyl-L-homocysteine + 4 H(+). Specifically dimethylates two adjacent adenosines (A1518 and A1519) in the loop of a conserved hairpin near the 3'-end of 16S rRNA in the 30S particle. May play a critical role in biogenesis of 30S subunits. In Prochlorococcus marinus (strain AS9601), this protein is Ribosomal RNA small subunit methyltransferase A.